The sequence spans 134 residues: Small ribosomal subunit protein uS9 (134 aa).

The protein belongs to the universal ribosomal protein uS9 family.

The sequence is that of Small ribosomal subunit protein uS9 from Pseudothermotoga lettingae (strain ATCC BAA-301 / DSM 14385 / NBRC 107922 / TMO) (Thermotoga lettingae).